The following is a 308-amino-acid chain: Probable very-long-chain enoyl-CoA reductase art-1 (308 aa).

The region spanning 7 to 85 (VYDAKRTDNL…VLYVRDLGPQ (79 aa)) is the Ubiquitin-like domain. Helical transmembrane passes span 112-132 (FIYGQAAVNATMHPAVQIAFF), 169-189 (WGFAAFVAYFVNHPLFTPPAF), 194-214 (VYFGLAGFVISEFGNLSIHIL), and 255-275 (WIFFSIMVQSLPAIIFTTAGF).

The protein belongs to the steroid 5-alpha reductase family.

The protein resides in the endoplasmic reticulum membrane. It carries out the reaction a very-long-chain 2,3-saturated fatty acyl-CoA + NADP(+) = a very-long-chain (2E)-enoyl-CoA + NADPH + H(+). It functions in the pathway lipid metabolism; fatty acid biosynthesis. In terms of biological role, catalyzes the last of the four reactions of the long-chain fatty acids elongation cycle. This endoplasmic reticulum-bound enzymatic process, allows the addition of 2 carbons to the chain of long- and very long-chain fatty acids/VLCFAs per cycle. This enzyme reduces the trans-2,3-enoyl-CoA fatty acid intermediate to an acyl-CoA that can be further elongated by entering a new cycle of elongation. Thereby, it participates in the production of VLCFAs of different chain lengths that are involved in multiple biological processes as precursors of membrane lipids and lipid mediators. This Caenorhabditis elegans protein is Probable very-long-chain enoyl-CoA reductase art-1 (art-1).